The sequence spans 528 residues: Succinate-semialdehyde dehydrogenase, mitochondrial (528 aa).

The N-terminal 34 residues, 1–34 (MVIGAAARVAIGGCRKLISSHTSLLLVSSQCRQM), are a transit peptide targeting the mitochondrion. 196–198 (TPW) contributes to the NAD(+) binding site. Arg-207 serves as a coordination point for substrate. NAD(+) is bound by residues 222-225 (KPSE), 275-280 (GSTAVG), and Glu-297. Glu-297 functions as the Proton acceptor in the catalytic mechanism. Arg-325 lines the substrate pocket. Cys-331 functions as the Nucleophile in the catalytic mechanism. Cys-331 and Cys-333 are oxidised to a cystine. 428–430 (EIF) contacts NAD(+). A substrate-binding site is contributed by Ser-488.

The protein belongs to the aldehyde dehydrogenase family. In terms of assembly, homotetramer. In terms of tissue distribution, expressed in developing leaf tissues.

The protein resides in the mitochondrion matrix. The enzyme catalyses succinate semialdehyde + NAD(+) + H2O = succinate + NADH + 2 H(+). It participates in amino-acid degradation; 4-aminobutanoate degradation. Its activity is regulated as follows. Competitive inhibition by NADH. Inhibited by ATP, ADP and AMP. Redox-regulated. Inhibited under oxydizing conditions. Oxidizes specifically succinate semialdehyde. Involved in plant response to environmental stress by preventing the accumulation of reactive oxygen species, probably by regulating proline, gamma-hydroxybutyrate (GHB) and gamma-aminobutyrate (GABA) levels. Required for the maintenance of the shoot apical meristem (SAM) structure and subsequent adaxial-abaxial axis-dependent development of cotyledons and leaves. The protein is Succinate-semialdehyde dehydrogenase, mitochondrial of Arabidopsis thaliana (Mouse-ear cress).